The following is a 607-amino-acid chain: UvrABC system protein C (607 aa).

Positions glycine 16 to isoleucine 94 constitute a GIY-YIG domain. Residues asparagine 203–valine 238 enclose the UVR domain.

The protein belongs to the UvrC family. In terms of assembly, interacts with UvrB in an incision complex.

The protein resides in the cytoplasm. In terms of biological role, the UvrABC repair system catalyzes the recognition and processing of DNA lesions. UvrC both incises the 5' and 3' sides of the lesion. The N-terminal half is responsible for the 3' incision and the C-terminal half is responsible for the 5' incision. The protein is UvrABC system protein C of Pseudomonas protegens (strain DSM 19095 / LMG 27888 / CFBP 6595 / CHA0).